Consider the following 208-residue polypeptide: Small ribosomal subunit protein uS4 (208 aa).

Residues 32–53 (LNRKRGKNSPGQHGASKVKMSD) are disordered. Positions 99–161 (LRLDNVVYRL…YKSNVIIKKL (63 aa)) constitute an S4 RNA-binding domain.

It belongs to the universal ribosomal protein uS4 family. Part of the 30S ribosomal subunit. Contacts protein S5. The interaction surface between S4 and S5 is involved in control of translational fidelity.

In terms of biological role, one of the primary rRNA binding proteins, it binds directly to 16S rRNA where it nucleates assembly of the body of the 30S subunit. Its function is as follows. With S5 and S12 plays an important role in translational accuracy. In Endomicrobium trichonymphae, this protein is Small ribosomal subunit protein uS4.